The primary structure comprises 372 residues: tRNA-specific 2-thiouridylase MnmA (372 aa).

ATP-binding positions include 7–14 (GLSGGVDS) and methionine 33. An interaction with target base in tRNA region spans residues 104–106 (NPD). Cysteine 109 functions as the Nucleophile in the catalytic mechanism. Residues cysteine 109 and cysteine 202 are joined by a disulfide bond. Glycine 134 is a binding site for ATP. Residues 152 to 154 (KDQ) are interaction with tRNA. Catalysis depends on cysteine 202, which acts as the Cysteine persulfide intermediate. Positions 310–311 (RY) are interaction with tRNA.

Belongs to the MnmA/TRMU family.

The protein localises to the cytoplasm. The enzyme catalyses S-sulfanyl-L-cysteinyl-[protein] + uridine(34) in tRNA + AH2 + ATP = 2-thiouridine(34) in tRNA + L-cysteinyl-[protein] + A + AMP + diphosphate + H(+). In terms of biological role, catalyzes the 2-thiolation of uridine at the wobble position (U34) of tRNA, leading to the formation of s(2)U34. The chain is tRNA-specific 2-thiouridylase MnmA from Mesomycoplasma hyopneumoniae (strain 232) (Mycoplasma hyopneumoniae).